The sequence spans 633 residues: MTSTHADKTGDVASRTGFVGLVVGAIGVVYGDIGTSPLYAFREALRPFTADGVHEFEVIGLISLMIWTLTIIVTFKYVLFLLRADNDGEGGTLSLLALLMKKMGRNVPVLFFAGLIGSALFIGDAMITPALSVMSALEGLKLITPAFAEYVPPLSAAIMIVLFAAQSRGTAAVSMFFGPITVLWFFAMAAGGVIHIGDDWRILAAINPINALSFLAHAGTVGLIVLGAVFLTVTGAEALYADLGHFGRRPIQMAWFVLVFPALLLNYLGQGALVLSQPAASADPFFLMYPDWALLPVVLLATLATIIASQAVITGAFSLARQAVHLGFLPRLRIKFTSETNTGQIYVPSVNLLLLTGVLMLIFSFGDSESLATAYGISVTGAMVITTMLAFQFLRAVWGYSFMLASAALLPLFVIEVVFLAANLLKIQDGGWVPVALALAIMTLMWTWTRGQTYLKKLRANNEIPLDSFIRSIERKSDHSPVTVPGTAVFLTSVPDRTPNVLLHNLKHNHVLHEQNVILTVWTEDEPYVPDNRRIKISQLSPRFVRLDINFGFMDDPDVTRALALCREGGFKFEIMKTSFYLGRRNLVRTPNTGLPGWQERIFMALEGFAIDPSDYFNLPSNRVVELGEQVAI.

12 helical membrane-spanning segments follow: residues 18–38 (FVGL…TSPL), 61–81 (LISL…VLFL), 107–127 (VPVL…DAMI), 143–163 (ITPA…IVLF), 176–196 (FFGP…VIHI), 211–231 (ALSF…AVFL), 255–275 (WFVL…ALVL), 293–313 (ALLP…QAVI), 345–365 (IYVP…IFSF), 371–391 (LATA…MLAF), 402–422 (FMLA…FLAA), and 429–449 (DGGW…WTWT).

Belongs to the HAK/KUP transporter (TC 2.A.72) family.

It localises to the cell inner membrane. The catalysed reaction is K(+)(in) + H(+)(in) = K(+)(out) + H(+)(out). In terms of biological role, transport of potassium into the cell. Likely operates as a K(+):H(+) symporter. This chain is Probable potassium transport system protein Kup 2, found in Rhizobium etli (strain ATCC 51251 / DSM 11541 / JCM 21823 / NBRC 15573 / CFN 42).